The sequence spans 404 residues: Neutral protease 2 homolog AFLA_065450 (404 aa).

The signal sequence occupies residues 1–19 (MRFISASSLLLALAPTLNA). Positions 20-185 (VPVEVAGSAQ…TQAVKILERR (166 aa)) are excised as a propeptide. Cystine bridges form between Cys-191–Cys-263 and Cys-270–Cys-288. A Zn(2+)-binding site is contributed by His-313. Glu-314 is an active-site residue. His-317 and Asp-328 together coordinate Zn(2+).

This sequence belongs to the peptidase M35 family. The cofactor is Zn(2+).

The protein localises to the secreted. It catalyses the reaction Preferential cleavage of bonds with hydrophobic residues in P1'. Also 3-Asn-|-Gln-4 and 8-Gly-|-Ser-9 bonds in insulin B chain.. In terms of biological role, secreted metalloproteinase that allows assimilation of proteinaceous substrates. Shows high activities on basic nuclear substrates such as histone and protamine. The chain is Neutral protease 2 homolog AFLA_065450 from Aspergillus flavus (strain ATCC 200026 / FGSC A1120 / IAM 13836 / NRRL 3357 / JCM 12722 / SRRC 167).